The following is a 471-amino-acid chain: Collagen alpha-3(IV) chain (471 aa).

Positions 1–238 are triple-helical region; the sequence is GLPGRKGPVG…KGKPGDTGPP (238 aa). The tract at residues 1-241 is disordered; it reads GLPGRKGPVG…PGDTGPPAAG (241 aa). Residues 52–61 show a composition bias toward pro residues; it reads MPGPPGPPGS. Residues 106–108 carry the Cell attachment site motif; that stretch reads RGD. The span at 127-141 shows a compositional bias: pro residues; the sequence is PGPPGPPGQSGPKGP. Residues 165-174 are compositionally biased toward low complexity; sequence SAGEPGMQGE. Residues 175-187 show a composition bias toward pro residues; that stretch reads PGPPGPPGDPGPC. Residues P232 and P238 each carry the hydroxyproline modification. Positions 246–470 constitute a Collagen IV NC1 domain; sequence GFVFTRHSQT…SRCQVCMKMR (225 aa). 6 cysteine pairs are disulfide-bonded: C261–C352, C294–C349, C306–C312, C371–C466, C405–C463, and C417–C423. M334 is covalently cross-linked (S-Lysyl-methionine sulfilimine (Met-Lys) (interchain with K-452)). K452 is covalently cross-linked (S-Lysyl-methionine sulfilimine (Lys-Met) (interchain with M-334)).

This sequence belongs to the type IV collagen family. In terms of assembly, there are six type IV collagen isoforms, alpha 1(IV)-alpha 6(IV), each of which can form a triple helix structure with 2 other chains to generate type IV collagen network. The alpha 3(IV) chain forms a triple helical protomer with alpha 4(IV) and alpha 5(IV); this triple helical structure dimerizes through NC1-NC1 domain interactions such that the alpha 3(IV), alpha 4(IV) and alpha 5(IV) chains of one protomer connect with the alpha 5(IV), alpha 4(IV) and alpha 3(IV) chains of the opposite promoter, respectively. Interacts with ITGB3. Associates with LAMB2 at the neuromuscular junction and in GBM. Prolines at the third position of the tripeptide repeating unit (G-X-Y) are hydroxylated in some or all of the chains. In terms of processing, type IV collagens contain numerous cysteine residues which are involved in inter- and intramolecular disulfide bonding. 12 of these, located in the NC1 domain, are conserved in all known type IV collagens. Post-translationally, the trimeric structure of the NC1 domains is stabilized by covalent bonds between Lys and Met residues. Phosphorylated. Thought to be phosphorylated by CERT, but CERT does not have kinase activity.

Its subcellular location is the secreted. It is found in the extracellular space. The protein resides in the extracellular matrix. The protein localises to the basement membrane. In terms of biological role, type IV collagen is the major structural component of glomerular basement membranes (GBM), forming a 'chicken-wire' meshwork together with laminins, proteoglycans and entactin/nidogen. This chain is Collagen alpha-3(IV) chain (COL4A3), found in Bos taurus (Bovine).